A 641-amino-acid polypeptide reads, in one-letter code: Choline O-acetyltransferase (641 aa).

Residues 1 to 29 (MPILEKTPPKMAAKSPSSEEEPGLPKLPV) are disordered. Residue S17 is modified to Phosphoserine. Residue H335 is the Proton acceptor of the active site. Residue S366 is modified to Phosphoserine. Residues 413–425 (GKTF…CSPD), S451, and Q552 each bind CoA. Positions 619–641 (QSGMGKPLATKEKVTRPSQVHQP) are disordered.

Belongs to the carnitine/choline acetyltransferase family.

The catalysed reaction is choline + acetyl-CoA = acetylcholine + CoA. Catalyzes the reversible synthesis of acetylcholine (ACh) from acetyl CoA and choline at cholinergic synapses. In Sus scrofa (Pig), this protein is Choline O-acetyltransferase (CHAT).